Reading from the N-terminus, the 253-residue chain is 5'-nucleotidase SurE (253 aa).

The a divalent metal cation site is built by D8, D9, S40, and N93.

Belongs to the SurE nucleotidase family. The cofactor is a divalent metal cation.

Its subcellular location is the cytoplasm. The catalysed reaction is a ribonucleoside 5'-phosphate + H2O = a ribonucleoside + phosphate. Nucleotidase that shows phosphatase activity on nucleoside 5'-monophosphates. This Methylobacterium sp. (strain 4-46) protein is 5'-nucleotidase SurE.